The primary structure comprises 78 residues: Conotoxin CaFr179 (78 aa).

The N-terminal stretch at 1–19 is a signal peptide; the sequence is MSGLGIMVLTLLLLVFMEA. The propeptide occupies 20–44; the sequence is SHQDAGEKQATQRDAINVRRRRSLA. 3 disulfide bridges follow: C52–C64, C56–C72, and C63–C76. Phenylalanine amide is present on F77.

This sequence belongs to the conotoxin O3 superfamily. Expressed by the venom duct.

The protein resides in the secreted. The polypeptide is Conotoxin CaFr179 (Conus caracteristicus (Characteristic cone)).